Reading from the N-terminus, the 271-residue chain is Putative phosphoenolpyruvate synthase regulatory protein (271 aa).

152–159 (GVSRCGKT) contributes to the ADP binding site.

Belongs to the pyruvate, phosphate/water dikinase regulatory protein family. PSRP subfamily.

It catalyses the reaction [pyruvate, water dikinase] + ADP = [pyruvate, water dikinase]-phosphate + AMP + H(+). It carries out the reaction [pyruvate, water dikinase]-phosphate + phosphate + H(+) = [pyruvate, water dikinase] + diphosphate. In terms of biological role, bifunctional serine/threonine kinase and phosphorylase involved in the regulation of the phosphoenolpyruvate synthase (PEPS) by catalyzing its phosphorylation/dephosphorylation. In Legionella pneumophila (strain Corby), this protein is Putative phosphoenolpyruvate synthase regulatory protein.